We begin with the raw amino-acid sequence, 555 residues long: Dihydroxy-acid dehydratase (555 aa).

Position 78 (Asp78) interacts with Mg(2+). Cys119 lines the [2Fe-2S] cluster pocket. Mg(2+) contacts are provided by Asp120 and Lys121. Lys121 is modified (N6-carboxylysine). Cys191 provides a ligand contact to [2Fe-2S] cluster. Position 444 (Glu444) interacts with Mg(2+). Ser470 acts as the Proton acceptor in catalysis.

Belongs to the IlvD/Edd family. In terms of assembly, homodimer. [2Fe-2S] cluster is required as a cofactor. It depends on Mg(2+) as a cofactor.

The catalysed reaction is (2R)-2,3-dihydroxy-3-methylbutanoate = 3-methyl-2-oxobutanoate + H2O. It catalyses the reaction (2R,3R)-2,3-dihydroxy-3-methylpentanoate = (S)-3-methyl-2-oxopentanoate + H2O. It functions in the pathway amino-acid biosynthesis; L-isoleucine biosynthesis; L-isoleucine from 2-oxobutanoate: step 3/4. The protein operates within amino-acid biosynthesis; L-valine biosynthesis; L-valine from pyruvate: step 3/4. Functions in the biosynthesis of branched-chain amino acids. Catalyzes the dehydration of (2R,3R)-2,3-dihydroxy-3-methylpentanoate (2,3-dihydroxy-3-methylvalerate) into 2-oxo-3-methylpentanoate (2-oxo-3-methylvalerate) and of (2R)-2,3-dihydroxy-3-methylbutanoate (2,3-dihydroxyisovalerate) into 2-oxo-3-methylbutanoate (2-oxoisovalerate), the penultimate precursor to L-isoleucine and L-valine, respectively. This is Dihydroxy-acid dehydratase from Oleidesulfovibrio alaskensis (strain ATCC BAA-1058 / DSM 17464 / G20) (Desulfovibrio alaskensis).